We begin with the raw amino-acid sequence, 24 residues long: Lectin (24 aa).

The span at 1–18 (AEEQSFSSTKFSTDQPNL) shows a compositional bias: polar residues. The segment at 1 to 24 (AEEQSFSSTKFSTDQPNLILQGDA) is disordered.

This sequence belongs to the leguminous lectin family. As to quaternary structure, homotetramer.

The sequence is that of Lectin from Crotalaria juncea (Sunn hemp).